A 92-amino-acid chain; its full sequence is MKVSTTALAVLLCTMTLCNQVFSAPYGADTPTACCFSYSRKIPRQFIVDYFETSSLCSQPGVIFLTKRNRQICADSKETWVQEYITDLELNA.

The N-terminal stretch at 1–23 (MKVSTTALAVLLCTMTLCNQVFS) is a signal peptide. 2 cysteine pairs are disulfide-bonded: Cys-34–Cys-57 and Cys-35–Cys-73.

It belongs to the intercrine beta (chemokine CC) family. In terms of assembly, self-associates. Also heterodimer of MIP-1-alpha(4-69) and MIP-1-beta(3-69). Interacts with CCR1. Expressed in lung, spleen, and pancreas.

The protein resides in the secreted. In terms of biological role, monokine with inflammatory and chemokinetic properties. Binds to CCR1, CCR4 and CCR5. One of the major HIV-suppressive factors produced by CD8+ T-cells. Recombinant MIP-1-alpha induces a dose-dependent inhibition of different strains of HIV-1, HIV-2, and simian immunodeficiency virus (SIV). The protein is C-C motif chemokine 3 (Ccl3) of Mus musculus (Mouse).